The following is a 427-amino-acid chain: Putative F-box protein At4g10740 (427 aa).

The F-box domain occupies 2–47; sequence RTTMSNLPKELVEDIVSRVPLHCLRAMRLTCKNWNALLESQSFKKM.

The protein is Putative F-box protein At4g10740 of Arabidopsis thaliana (Mouse-ear cress).